The chain runs to 246 residues: Chemokine-binding protein (246 aa).

Positions 108-125 (SESSDGNTVNTRLSSVSP) are enriched in polar residues. Residues 108 to 132 (SESSDGNTVNTRLSSVSPGQGKDSP) are disordered.

Belongs to the orthopoxvirus OPG001 family.

It is found in the secreted. In terms of biological role, inhibits host immune defense by binding to host chemokines. Binds host CC chemokines (beta chemokines) such as RANTES with high affinity, but not CXC or C chemokines (alpha and gamma chemokines). The chain is Chemokine-binding protein (OPG001) from Monkeypox virus.